We begin with the raw amino-acid sequence, 308 residues long: Very-long-chain enoyl-CoA reductase (308 aa).

Residues 1-86 (MKHYEVEIRD…YFRDLGAQIS (86 aa)) lie on the Cytoplasmic side of the membrane. K22 carries the post-translational modification N6-acetyllysine. The residue at position 58 (S58) is a Phosphoserine. The residue at position 60 (K60) is an N6-acetyllysine. The helical transmembrane segment at 87–106 (WVTVFLTEYAGPLFIYLLFY) threads the bilayer. Residues 107–124 (FRVPFIYGRKYDFTSSRH) lie on the Lumenal side of the membrane. A helical transmembrane segment spans residues 125-147 (TVVHLACMCHSFHYIKRLLETLF). Over 148–158 (VHRFSHGTMPL) the chain is Cytoplasmic. The chain crosses the membrane as a helical span at residues 159–180 (RNIFKNCTYYWGFAAWMAYYIN). The Lumenal portion of the chain corresponds to 181–189 (HPLYTPPTY). A helical membrane pass occupies residues 190 to 216 (GVQQVKLALAIFVICQLGNFSIHMALR). Over 217–245 (DLRPAGSKTRKIPYPTKNPFTWLFLLVSC) the chain is Cytoplasmic. A helical transmembrane segment spans residues 246 to 262 (PNYTYEVGSWIGFAIMT). Topologically, residues 263-264 (QC) are lumenal. Residues 265 to 292 (VPVALFSLVGFTQMTIWAKGKHRSYLKE) form a helical membrane-spanning segment. The Cytoplasmic portion of the chain corresponds to 293–308 (FRDYPPLRMPIIPFLL).

Belongs to the steroid 5-alpha reductase family. In terms of assembly, interacts with ELOVL1 and LASS2. Post-translationally, glycosylated. Expressed at high levels in brain and is also found at lower levels in several other tissues.

It is found in the endoplasmic reticulum membrane. It carries out the reaction a very-long-chain 2,3-saturated fatty acyl-CoA + NADP(+) = a very-long-chain (2E)-enoyl-CoA + NADPH + H(+). It catalyses the reaction octadecanoyl-CoA + NADP(+) = (2E)-octadecenoyl-CoA + NADPH + H(+). The catalysed reaction is (2E,7Z,10Z,13Z,16Z)-docosapentaenoyl-CoA + NADPH + H(+) = (7Z,10Z,13Z,16Z)-docosatetraenoyl-CoA + NADP(+). The enzyme catalyses (2E,7Z,10Z,13Z,16Z,19Z)-docosahexaenoyl-CoA + NADPH + H(+) = (7Z,10Z,13Z,16Z,19Z)-docosapentaenoyl-CoA + NADP(+). It carries out the reaction (2E,8Z,11Z,14Z)-eicosatetraenoyl-CoA + NADPH + H(+) = (8Z,11Z,14Z)-eicosatrienoyl-CoA + NADP(+). It catalyses the reaction (2E)-hexadecenoyl-CoA + NADPH + H(+) = hexadecanoyl-CoA + NADP(+). It participates in lipid metabolism; fatty acid biosynthesis. The protein operates within lipid metabolism; sphingolipid metabolism. Functionally, involved in both the production of very long-chain fatty acids for sphingolipid synthesis and the degradation of the sphingosine moiety in sphingolipids through the sphingosine 1-phosphate metabolic pathway. Catalyzes the last of the four reactions of the long-chain fatty acids elongation cycle. This endoplasmic reticulum-bound enzymatic process, allows the addition of 2 carbons to the chain of long- and very long-chain fatty acids/VLCFAs per cycle. This enzyme reduces the trans-2,3-enoyl-CoA fatty acid intermediate to an acyl-CoA that can be further elongated by entering a new cycle of elongation. Thereby, it participates in the production of VLCFAs of different chain lengths that are involved in multiple biological processes as precursors of membrane lipids and lipid mediators. Catalyzes the saturation step of the sphingosine 1-phosphate metabolic pathway, the conversion of trans-2-hexadecenoyl-CoA to palmitoyl-CoA. The sequence is that of Very-long-chain enoyl-CoA reductase (Tecr) from Rattus norvegicus (Rat).